Reading from the N-terminus, the 101-residue chain is Protein S100-A4 (101 aa).

A2 is modified (N-acetylalanine). EF-hand domains are found at residues 12–47 (IVST…SFLG) and 50–85 (TDEA…IAMM). Residues K28 and E33 each contribute to the Ca(2+) site. K35 is subject to N6-acetyllysine. Ca(2+)-binding residues include D63, N65, D67, E69, and E74.

Belongs to the S-100 family. As to quaternary structure, homodimer. Interacts with PPFIBP1 in a calcium-dependent mode. Interacts with PGLYRP1; this complex acts as a chemoattractant that promotes lymphocyte movement. Interacts with MYH9; this interaction increases cell motility. Interacts with Annexin 2/ANXA2. Interacts with TP53; this interaction promotes TP53 degradation. Interacts with CCR5 and CXCR3. Interacts with FCGR3A; this interaction inhibits PKC-dependent phosphorylation of FCGR3A. Specifically expressed in different metastatic cells.

It localises to the secreted. The protein resides in the nucleus. It is found in the cytoplasm. Its function is as follows. Calcium-binding protein that plays a role in various cellular processes including motility, angiogenesis, cell differentiation, apoptosis, and autophagy. Increases cell motility and invasiveness by interacting with non-muscle myosin heavy chain (NMMHC) IIA/MYH9. Mechanistically, promotes filament depolymerization and increases the amount of soluble myosin-IIA, resulting in the formation of stable protrusions facilitating chemotaxis. Also modulates the pro-apoptotic function of TP53 by binding to its C-terminal transactivation domain within the nucleus and reducing its protein levels. Within the extracellular space, stimulates cytokine production including granulocyte colony-stimulating factor and CCL24 from T-lymphocytes. In addition, stimulates T-lymphocyte chemotaxis by acting as a chemoattractant complex with PGLYRP1 that promotes lymphocyte migration via CCR5 and CXCR3 receptors. The sequence is that of Protein S100-A4 (S100a4) from Mus musculus (Mouse).